The chain runs to 310 residues: Quinolinate synthase (310 aa).

Positions 27 and 44 each coordinate iminosuccinate. Cys-89 is a binding site for [4Fe-4S] cluster. Residues 115 to 117 (YVN) and Ser-132 contribute to the iminosuccinate site. Cys-175 is a [4Fe-4S] cluster binding site. Residues 201 to 203 (HPE) and Thr-222 contribute to the iminosuccinate site. Cys-267 serves as a coordination point for [4Fe-4S] cluster.

The protein belongs to the quinolinate synthase family. Type 2 subfamily. It depends on [4Fe-4S] cluster as a cofactor.

Its subcellular location is the cytoplasm. The catalysed reaction is iminosuccinate + dihydroxyacetone phosphate = quinolinate + phosphate + 2 H2O + H(+). The protein operates within cofactor biosynthesis; NAD(+) biosynthesis; quinolinate from iminoaspartate: step 1/1. Its function is as follows. Catalyzes the condensation of iminoaspartate with dihydroxyacetone phosphate to form quinolinate. The protein is Quinolinate synthase of Thermus thermophilus (strain ATCC BAA-163 / DSM 7039 / HB27).